The sequence spans 466 residues: FPYQGSSIILESGNVNDYEVVYPRKVTALPKGAVQQKYEDTMQYEFKVNGEPVVLHLEKNKGLFSKDYSETHYSPDGRRITTHPLVEDHCYYRGRIRNDADSTASISACNGLKGHFKLRGETYLIEPMKISNSEAHAVYKYENVEKEDEAHKMCGVTQNWESYEPIKKASQLIVTPEHQRYMEIVIVVDHSMYTKYNGDSDKIKTWIYEMSNTIRESYRYLYIDTSVAAIEIWSEKDLINVETSAKNTLESFGEWRARDLIHRISHDNAQLLTATDLDGPTIGLAYVASMCDPKRSVGVVQDHSSVNHLVAITLAHEIAHNLGVRHDEGSCSCGSGYTCIMSPVINPDAMKYFSDCSYIQCWDYIMKENPPCILNKPLRTDTVSTPVSGNELLEAGKDYDRDSSANPCYDAATCKLNQGAQCTAGPCCDQGRFKEEGTICRRARGDDLDDYCNGISGDCPRNPYHA.

The first 6 residues, 1 to 6 (FPYQGS), serve as a signal peptide directing secretion. The propeptide occupies 7–174 (SIILESGNVN…PIKKASQLIV (168 aa)). Residues 180 to 377 (RYMEIVIVVD…ENPPCILNKP (198 aa)) form the Peptidase M12B domain. 2 residues coordinate Ca(2+): Glu-183 and Asp-267. Intrachain disulfides connect Cys-291-Cys-372, Cys-331-Cys-356, and Cys-333-Cys-339. Zn(2+) is bound at residue His-316. Residue Glu-317 is part of the active site. Zn(2+) is bound by residues His-320 and His-326. Ca(2+) is bound by residues Cys-372 and Asn-375. Residues 377 to 401 (PLRTDTVSTPVSGNELLEAGKDYDR) constitute a propeptide that is removed on maturation. In terms of domain architecture, Disintegrin spans 385–466 (TPVSGNELLE…GDCPRNPYHA (82 aa)). 3 cysteine pairs are disulfide-bonded: Cys-422/Cys-428, Cys-427/Cys-452, and Cys-440/Cys-459. Positions 444–446 (RGD) match the Cell attachment site motif.

This sequence belongs to the venom metalloproteinase (M12B) family. P-II subfamily. P-IIa sub-subfamily. Monomer. The cofactor is Zn(2+). As to expression, expressed by the venom gland.

Its subcellular location is the secreted. Its function is as follows. Impairs hemostasis in the envenomed animal. Inhibits platelet aggregation induced by ADP, thrombin, platelet-activating factor and collagen. Acts by inhibiting fibrinogen interaction with platelet receptors GPIIb/GPIIIa (ITGA2B/ITGB3). The sequence is that of Zinc metalloproteinase/disintegrin from Deinagkistrodon acutus (Hundred-pace snake).